The primary structure comprises 344 residues: N-acetyl-gamma-glutamyl-phosphate reductase (344 aa).

Cys-149 is an active-site residue.

The protein belongs to the NAGSA dehydrogenase family. Type 1 subfamily.

The protein resides in the cytoplasm. The enzyme catalyses N-acetyl-L-glutamate 5-semialdehyde + phosphate + NADP(+) = N-acetyl-L-glutamyl 5-phosphate + NADPH + H(+). It participates in amino-acid biosynthesis; L-arginine biosynthesis; N(2)-acetyl-L-ornithine from L-glutamate: step 3/4. In terms of biological role, catalyzes the NADPH-dependent reduction of N-acetyl-5-glutamyl phosphate to yield N-acetyl-L-glutamate 5-semialdehyde. This chain is N-acetyl-gamma-glutamyl-phosphate reductase, found in Acidithiobacillus ferrooxidans (strain ATCC 23270 / DSM 14882 / CIP 104768 / NCIMB 8455) (Ferrobacillus ferrooxidans (strain ATCC 23270)).